Reading from the N-terminus, the 357-residue chain is Serine protease 1 (357 aa).

Positions 1-29 (MRRTTRARTGLSALLLAASLGLGAAPAGA) are cleaved as a signal peptide. Residues 30–170 (DAPQRPAPTP…TRVPGVFQRE (141 aa)) constitute a propeptide that is removed on maturation. Residues Cys184 and Cys204 are joined by a disulfide bond. Catalysis depends on charge relay system residues His203, Asp232, and Ser313. An intrachain disulfide couples Cys307 to Cys333.

This sequence belongs to the peptidase S1 family.

The protein localises to the secreted. Serine protease that preferentially cleaves peptide bonds on the C-terminal side of aspartate and glutamate with a 10-fold higher reactivity for a glutamyl bond than an aspartyl bond. The protein is Serine protease 1 of Streptomyces fradiae (Streptomyces roseoflavus).